The sequence spans 373 residues: ATP phosphoribosyltransferase regulatory subunit (373 aa).

Belongs to the class-II aminoacyl-tRNA synthetase family. HisZ subfamily. As to quaternary structure, heteromultimer composed of HisG and HisZ subunits.

It localises to the cytoplasm. It functions in the pathway amino-acid biosynthesis; L-histidine biosynthesis; L-histidine from 5-phospho-alpha-D-ribose 1-diphosphate: step 1/9. In terms of biological role, required for the first step of histidine biosynthesis. May allow the feedback regulation of ATP phosphoribosyltransferase activity by histidine. This chain is ATP phosphoribosyltransferase regulatory subunit, found in Chelativorans sp. (strain BNC1).